Here is a 179-residue protein sequence, read N- to C-terminus: Large ribosomal subunit protein uL6 (179 aa).

This sequence belongs to the universal ribosomal protein uL6 family. Part of the 50S ribosomal subunit.

In terms of biological role, this protein binds to the 23S rRNA, and is important in its secondary structure. It is located near the subunit interface in the base of the L7/L12 stalk, and near the tRNA binding site of the peptidyltransferase center. In Chlorobium phaeobacteroides (strain BS1), this protein is Large ribosomal subunit protein uL6.